We begin with the raw amino-acid sequence, 244 residues long: MLIDWFTIVAQIINFLILVFLLNRFLYKPIVKTIKARQQEIENRWQDAEKEKKSAKNEANSYQKKQQELEEKKQEIMIQAQTKADEKYDNLVEEARQDVEQKRKTWDESLEREKAQFFDRFQEKIMQQIYKITGHVLGDLANASLEQQIINQFIHRLENLSEKERENLANSLNTTDNGLIIRSHFEISPESRNRLLSSLQQTHIYQGDNVQFMTNSDLICGIELQASDYKIAWNLKDYVEALEI.

A helical membrane pass occupies residues 2-22 (LIDWFTIVAQIINFLILVFLL).

This sequence belongs to the ATPase B chain family. F-type ATPases have 2 components, F(1) - the catalytic core - and F(0) - the membrane proton channel. F(1) has five subunits: alpha(3), beta(3), gamma(1), delta(1), epsilon(1). F(0) has four main subunits: a(1), b(1), b'(1) and c(10-14). The alpha and beta chains form an alternating ring which encloses part of the gamma chain. F(1) is attached to F(0) by a central stalk formed by the gamma and epsilon chains, while a peripheral stalk is formed by the delta, b and b' chains.

The protein resides in the cellular thylakoid membrane. In terms of biological role, f(1)F(0) ATP synthase produces ATP from ADP in the presence of a proton or sodium gradient. F-type ATPases consist of two structural domains, F(1) containing the extramembraneous catalytic core and F(0) containing the membrane proton channel, linked together by a central stalk and a peripheral stalk. During catalysis, ATP synthesis in the catalytic domain of F(1) is coupled via a rotary mechanism of the central stalk subunits to proton translocation. Its function is as follows. Component of the F(0) channel, it forms part of the peripheral stalk, linking F(1) to F(0). The chain is ATP synthase subunit b 2 from Crocosphaera subtropica (strain ATCC 51142 / BH68) (Cyanothece sp. (strain ATCC 51142)).